The primary structure comprises 568 residues: MANSPHGGVLKDLLAGDAPRHDELAAEAETLPAIVLSERQLCDLELIMNGGFSPLEGFMTQKDFDGVCENCRLADGHLFSMPITLDASQQVISDSNLKPGSRVTLRDFRDDRNLAILTIEEKEAKLVFGGDPEHPAIKYFNTKVEDFYIGGKIEAVNKLNHYDYVALRYSPAELRVHFDKLGWTRVVAFQTRNPMHRAHRELTVRAARARQANVLIHPVVGLTKPGDIDHFTRVRAYQALLPRYPNGMAVLGLLPLAMRMGGPREAIWHAIIRKNHGATHFIVGRDHAGPGKNSKGEEFYGPYDAQHAVEKYREELGIEVVEFQQVTYLPDTDEYKPKDEVPAGIKTLDISGTELRNRLRTGAHIPEWFSYPEVVKILLRESSPPRATQGFTIFLTGYMNSGKDAIARALQVTLNQQGGRSVTLLLGDTVRHELSSELGFSAEDRHTNVQRIAFVAGELTRAGAAVIAAPIAPYERSRKAAREAVSGLGGSFFLVHVNTPLEYCEKTDKRGIYAKARRGEIKGFTGVDDPYEAPENADLVVDVSKQSVRSIVHEIILMLESEGYFDRL.

The interval 1–162 (MANSPHGGVL…IEAVNKLNHY (162 aa)) is N-terminal. Residues 163–388 (DYVALRYSPA…LRESSPPRAT (226 aa)) are catalytic. Gln190 provides a ligand contact to sulfate. ATP-binding positions include 190–193 (QTRN) and 284–287 (GRDH). Residues Thr191, Arg192, and Asn193 contribute to the active site. Residue Arg192 participates in sulfate binding. Sulfate is bound at residue Ala288. Val326 is an ATP binding site. The allosteric regulation domain; adenylyl-sulfate kinase-like stretch occupies residues 389 to 568 (QGFTIFLTGY…LESEGYFDRL (180 aa)). 3'-phosphoadenylyl sulfate is bound by residues 428–431 (DTVR), Arg445, 471–472 (IA), and Arg510.

It in the N-terminal section; belongs to the sulfate adenylyltransferase family. The protein in the C-terminal section; belongs to the APS kinase family. In terms of assembly, homohexamer. Dimer of trimers.

Its subcellular location is the cytoplasm. It catalyses the reaction sulfate + ATP + H(+) = adenosine 5'-phosphosulfate + diphosphate. The protein operates within sulfur metabolism; hydrogen sulfide biosynthesis; sulfite from sulfate: step 1/3. Its activity is regulated as follows. Allosterically inhibited by 3'-phosphoadenosine 5'-phosphosulfate (PAPS). In terms of biological role, catalyzes the first intracellular reaction of sulfate assimilation, forming adenosine-5'-phosphosulfate (APS) from inorganic sulfate and ATP. Plays an important role in sulfate activation as a component of the biosynthesis pathway of sulfur-containing amino acids. The sequence is that of Sulfate adenylyltransferase from Aspergillus terreus.